We begin with the raw amino-acid sequence, 292 residues long: Cyclin-dependent-like kinase 5 (292 aa).

The 283-residue stretch at 4–286 folds into the Protein kinase domain; that stretch reads YDKMEKIGEG…ADAALRHAYF (283 aa). ATP-binding positions include 10-18 and lysine 33; that span reads IGEGTYGTV. Aspartate 126 serves as the catalytic Proton acceptor. Mg(2+) is bound by residues asparagine 131 and aspartate 144.

The protein belongs to the protein kinase superfamily. CMGC Ser/Thr protein kinase family. CDC2/CDKX subfamily. As to quaternary structure, heterodimer composed of a catalytic subunit cdk-5 and a regulatory subunit cdka-1. Interaction with cdka-1 is required for cdk-5 activation. The cofactor is Mg(2+).

It is found in the cytoplasm. The protein localises to the cell projection. It localises to the dendrite. It catalyses the reaction L-seryl-[protein] + ATP = O-phospho-L-seryl-[protein] + ADP + H(+). The catalysed reaction is L-threonyl-[protein] + ATP = O-phospho-L-threonyl-[protein] + ADP + H(+). Its function is as follows. Proline-directed serine/threonine-protein kinase which, in several motor neurons, promotes the polarized trafficking of synaptic vesicles and dense-core vesicles (DCV). In the ventral nerve cord, phosphorylates lin-10 and thereby prevents lin-10-mediated anterograde trafficking of the glutamate receptor glr-1. Involved in the inhibition of glr-1 trafficking in hypoxic conditions. In DA motor neurons but not in DB motor neurons, regulates axonal transport of synaptic vesicle precursors by inhibiting dynein-mediated retrograde transport. Regulates the trafficking of dense-core vesicles in DA and DB motor neurons by promoting anterograde trafficking to the axon and preventing dynein-dependent trafficking to the dendrite. May regulate these processes in association with cdka-1/p35. Activity may be regulated by cyy-1. Involved in synapse formation during DD motor neuron remodeling by regulating transport of disassembled synaptic material to the new synaptic sites probably by activating the motor protein unc-104/kinesin-3. Regulates microtubule polarity in the dendrite of DB motor neurons. May also play a role in GABAergic synaptic vesicle localization in the ventral nerve cord. This Caenorhabditis elegans protein is Cyclin-dependent-like kinase 5.